A 477-amino-acid chain; its full sequence is Glycogen synthase (477 aa).

Lys-15 lines the ADP-alpha-D-glucose pocket.

It belongs to the glycosyltransferase 1 family. Bacterial/plant glycogen synthase subfamily.

The enzyme catalyses [(1-&gt;4)-alpha-D-glucosyl](n) + ADP-alpha-D-glucose = [(1-&gt;4)-alpha-D-glucosyl](n+1) + ADP + H(+). It functions in the pathway glycan biosynthesis; glycogen biosynthesis. In terms of biological role, synthesizes alpha-1,4-glucan chains using ADP-glucose. In Myxococcus xanthus (strain DK1622), this protein is Glycogen synthase.